A 186-amino-acid chain; its full sequence is Lipid A palmitoyltransferase PagP (186 aa).

A signal peptide spans 1-25 (MKVSKYVAIFFFVFIQLISVGKVFA). Catalysis depends on residues His-58, Asp-101, and Ser-102.

The protein belongs to the lipid A palmitoyltransferase family. In terms of assembly, homodimer.

The protein localises to the cell outer membrane. It carries out the reaction lipid A (E. coli) + a 1-hexadecanoyl-2-acyl-sn-glycero-3-phosphocholine = hepta-acyl lipid A (E. coli) + a 2-acyl-sn-glycero-3-phosphocholine. The catalysed reaction is lipid IIA + a 1-hexadecanoyl-2-acyl-sn-glycero-3-phosphocholine = lipid IIB + a 2-acyl-sn-glycero-3-phosphocholine. It catalyses the reaction lipid IVA (E. coli) + a 1-hexadecanoyl-2-acyl-sn-glycero-3-phosphocholine = lipid IVB (E. coli) + a 2-acyl-sn-glycero-3-phosphocholine. Functionally, transfers a palmitate residue from the sn-1 position of a phospholipid to the N-linked hydroxymyristate on the proximal unit of lipid A or its precursors. This is Lipid A palmitoyltransferase PagP from Escherichia coli O6:K15:H31 (strain 536 / UPEC).